Here is a 388-residue protein sequence, read N- to C-terminus: Galactokinase (388 aa).

Substrate is bound at residue 33 to 36 (EHTD). Residues Ser-67 and 124 to 130 (GAGLSSS) each bind ATP. The Mg(2+) site is built by Ser-130 and Glu-162. The active-site Proton acceptor is the Asp-174. Substrate is bound at residue Tyr-224.

This sequence belongs to the GHMP kinase family. GalK subfamily.

It localises to the cytoplasm. The catalysed reaction is alpha-D-galactose + ATP = alpha-D-galactose 1-phosphate + ADP + H(+). The protein operates within carbohydrate metabolism; galactose metabolism. Its function is as follows. Catalyzes the transfer of the gamma-phosphate of ATP to D-galactose to form alpha-D-galactose-1-phosphate (Gal-1-P). This Lacticaseibacillus casei (strain BL23) (Lactobacillus casei) protein is Galactokinase.